We begin with the raw amino-acid sequence, 156 residues long: Envelope glycoprotein L (156 aa).

Residues 1–16 (MSPLVAVLVFFSAALG) form the signal peptide. The gL alphaherpesvirus-type domain occupies 50 to 156 (ELEWDDEDHP…LRYNGGPPAE (107 aa)). C71 and C95 are disulfide-bonded.

Belongs to the herpesviridae glycoprotein L (gL) family. Alphaherpesvirinae gL subfamily. Interacts with glycoprotein H (gH); this interaction is necessary for the correct processing and cell surface expression of gH. The heterodimer gH/gL seems to interact with gB trimers during fusion. O-glycosylated, and sialylated.

It localises to the virion membrane. It is found in the host cell membrane. The protein localises to the host Golgi apparatus. The protein resides in the host trans-Golgi network. The heterodimer glycoprotein H-glycoprotein L is required for the fusion of viral and plasma membranes leading to virus entry into the host cell. Acts as a functional inhibitor of gH and maintains gH in an inhibited form. Upon binding to host integrins, gL dissociates from gH leading to activation of the viral fusion glycoproteins gB and gH. The chain is Envelope glycoprotein L from Suid herpesvirus 1 (strain Indiana-Funkhauser / Becker) (SuHV-1).